The sequence spans 256 residues: Ribonuclease 3 (256 aa).

Positions 3–125 (LEALQQRLGY…IFGAVFLDGG (123 aa)) constitute an RNase III domain. Position 38 (Glu-38) interacts with Mg(2+). The active site involves Asp-42. Asp-111 and Glu-114 together coordinate Mg(2+). Residue Glu-114 is part of the active site. Residues 152 to 222 (DAKTLLQEYL…AKLALEEAHR (71 aa)) form the DRBM domain. The segment at 227–256 (LVKRSRAERTGKTRKQATPPDPQLSLRLKE) is disordered.

It belongs to the ribonuclease III family. In terms of assembly, homodimer. Mg(2+) is required as a cofactor.

Its subcellular location is the cytoplasm. The catalysed reaction is Endonucleolytic cleavage to 5'-phosphomonoester.. In terms of biological role, digests double-stranded RNA. Involved in the processing of primary rRNA transcript to yield the immediate precursors to the large and small rRNAs (23S and 16S). Processes some mRNAs, and tRNAs when they are encoded in the rRNA operon. Processes pre-crRNA and tracrRNA of type II CRISPR loci if present in the organism. The chain is Ribonuclease 3 from Ralstonia nicotianae (strain ATCC BAA-1114 / GMI1000) (Ralstonia solanacearum).